A 566-amino-acid chain; its full sequence is Zinc finger protein 704 (566 aa).

Disordered regions lie at residues 1–148 (MQAR…ARGA), 166–203 (DFRRDSSKKPSHHLFPLAMEEDVRTADTKKTSRVLDQE), and 253–324 (PLVR…DEAD). Positions 12–31 (LGSRRGGAAPAPAPEAAALG) are enriched in low complexity. The span at 32 to 55 (LPPPGPSPAAAPGSWRPPLPPPRG) shows a compositional bias: pro residues. Over residues 56–72 (TGPSRAAAASSPVLLLL) the composition is skewed to low complexity. Residues 91 to 100 (RVTEKPRGVA) show a composition bias toward basic and acidic residues. A compositionally biased stretch (acidic residues) spans 101–128 (EEEDDDEEEDEEVVVEVVDGDEDDEDAE). The span at 186 to 203 (EDVRTADTKKTSRVLDQE) shows a compositional bias: basic and acidic residues. The segment covering 267 to 290 (SGSWKEGAPSSSSSSGYWSWSAPS) has biased composition (low complexity). The segment at 346-371 (FKCLWKSCGKVLNTAAGIQKHIRAVH) adopts a C2H2-type zinc-finger fold. Residues serine 378 and serine 381 each carry the phosphoserine modification. Disordered regions lie at residues 409–436 (VSPSQSLASAPAFPIPDSSRTETPCAKT) and 497–535 (PVSPPHHPTAGSGEQRQHAHTALSSPPRGTVTLRKPRGE). Residues 471 to 566 (GSAKFTPNGS…WKKACQRFID (96 aa)) form a sufficient for binding to RE2 sequence motifs region. Residues 537–541 (KKCRK) carry the CR1 motif. Residues 555-559 (CRWKK) carry the CR2 motif.

Its subcellular location is the nucleus. In terms of biological role, transcription factor which binds to RE2 sequence elements in the MYOD1 enhancer. This is Zinc finger protein 704 from Mus musculus (Mouse).